We begin with the raw amino-acid sequence, 492 residues long: Phosphoenolpyruvate carboxylase (492 aa).

It belongs to the PEPCase type 2 family. As to quaternary structure, homotetramer. Mg(2+) is required as a cofactor.

The catalysed reaction is oxaloacetate + phosphate = phosphoenolpyruvate + hydrogencarbonate. Catalyzes the irreversible beta-carboxylation of phosphoenolpyruvate (PEP) to form oxaloacetate (OAA), a four-carbon dicarboxylic acid source for the tricarboxylic acid cycle. The polypeptide is Phosphoenolpyruvate carboxylase (Halobacterium salinarum (strain ATCC 29341 / DSM 671 / R1)).